The following is a 556-amino-acid chain: CBS domain-containing protein CBSCBSPB3 (556 aa).

Polar residues-rich tracts occupy residues 1-20 (MSTQ…NSTV) and 30-44 (PVQS…NTSK). Residues 1 to 63 (MSTQATGPSS…SQAPSNGERT (63 aa)) are disordered. Position 2 is an N-acetylserine (Ser-2). CBS domains are found at residues 68–127 (RLSK…RPDQ), 134–189 (MTRN…RMEK), 235–294 (ITDN…LSPE), and 302–360 (MTPN…ENSS). Residues 414-502 (GNSFSFKFED…KVLRLHLDFT (89 aa)) form the PB1 domain. Residues 527–549 (WVSWRGGVVVTGAVVLTSIAIVV) traverse the membrane as a helical segment.

It is found in the membrane. This is CBS domain-containing protein CBSCBSPB3 (CBSCBSPB3) from Arabidopsis thaliana (Mouse-ear cress).